Consider the following 352-residue polypeptide: Serine protease 55 (352 aa).

Positions 1 to 18 (MLLFSVLLLLSLVTGTQL) are cleaved as a signal peptide. One can recognise a Peptidase S1 domain in the interval 68 to 300 (ITGGMEAEVG…YNLWIEKVTQ (233 aa)). An intrachain disulfide couples cysteine 93 to cysteine 109. Catalysis depends on charge relay system residues histidine 108 and aspartate 156. Intrachain disulfides connect cysteine 189–cysteine 256, cysteine 222–cysteine 235, and cysteine 246–cysteine 276. N-linked (GlcNAc...) asparagine glycosylation occurs at asparagine 240. The Charge relay system role is filled by serine 250. Residues 308–330 (AEKRRTSVKQKPMGSPVSGVPEP) are disordered. Residues 319-330 (PMGSPVSGVPEP) show a composition bias toward low complexity. The GPI-anchor amidated serine moiety is linked to residue serine 325. A propeptide spans 326 to 352 (GVPEPGSPRSWLLLCPLSHVLFRAILY) (removed in mature form).

It belongs to the peptidase S1 family. In terms of tissue distribution, only detected in testis. Expressed in spermatogonia, spermatocytes, spermatids, Leydig and Sertoli cells. Expressed in prostate cancer and ovarian cancer (at protein level).

Its subcellular location is the cell membrane. It is found in the cytoplasm. The protein resides in the cytosol. Its function is as follows. Probable serine protease, which plays a crucial role in the fertility of male mice including sperm migration and sperm-egg interaction. In Homo sapiens (Human), this protein is Serine protease 55 (PRSS55).